A 68-amino-acid chain; its full sequence is Beta-defensin 1 (68 aa).

Residues Met1 to Gly21 form the signal peptide. A propeptide spanning residues Asp22 to Ser32 is cleaved from the precursor. Cystine bridges form between Cys37/Cys66, Cys44/Cys59, and Cys49/Cys67.

It belongs to the beta-defensin family. Monomer. Homodimer.

The protein resides in the secreted. It is found in the membrane. Functionally, has bactericidal activity. May act as a ligand for C-C chemokine receptor CCR6. Positively regulates the sperm motility and bactericidal activity in a CCR6-dependent manner. Binds to CCR6 and triggers Ca2+ mobilization in the sperm which is important for its motility. The chain is Beta-defensin 1 (DEFB1) from Presbytis melalophos (Mitred leaf monkey).